The following is a 76-amino-acid chain: Exodeoxyribonuclease 7 small subunit (76 aa).

It belongs to the XseB family. Heterooligomer composed of large and small subunits.

The protein localises to the cytoplasm. It carries out the reaction Exonucleolytic cleavage in either 5'- to 3'- or 3'- to 5'-direction to yield nucleoside 5'-phosphates.. Functionally, bidirectionally degrades single-stranded DNA into large acid-insoluble oligonucleotides, which are then degraded further into small acid-soluble oligonucleotides. The protein is Exodeoxyribonuclease 7 small subunit of Enterococcus faecalis (strain ATCC 700802 / V583).